The following is a 390-amino-acid chain: Putative transposase YncI (390 aa).

It belongs to the transposase 11 family.

This chain is Putative transposase YncI (yncI), found in Escherichia coli O157:H7.